A 132-amino-acid polypeptide reads, in one-letter code: Fatty acid-binding protein, intestinal (132 aa).

Position 2 is an N-acetylalanine (Ala2). Hexadecanoate-binding residues include Trp83 and Arg107. Residues Trp83 and Arg107 each coordinate tetradecanoate.

It belongs to the calycin superfamily. Fatty-acid binding protein (FABP) family.

Its subcellular location is the cytoplasm. Functionally, FABPs are thought to play a role in the intracellular transport of long-chain fatty acids and their acyl-CoA esters. The chain is Fatty acid-binding protein, intestinal (fabp2) from Xenopus laevis (African clawed frog).